The chain runs to 300 residues: PTB domain-containing engulfment adapter protein 1 (300 aa).

A PID domain is found at 21 to 176 (AKHFIPYNAK…GGLQKRIQDL (156 aa)). Residues 160–199 (VETRKQIGGLQKRIQDLETENVELKKQLQVLEEQLMIAQV) adopt a coiled-coil conformation.

The protein belongs to the ced-6 family.

It is found in the cytoplasm. Its function is as follows. May function as an adapter protein. Required for efficient phagocytosis of apoptotic cells. May play a role in the internalization and endosomal trafficking of various lrp1 ligands. The protein is PTB domain-containing engulfment adapter protein 1 (gulp1) of Danio rerio (Zebrafish).